We begin with the raw amino-acid sequence, 261 residues long: Guanine nucleotide exchange factor BopE (261 aa).

The protein belongs to the GEF (guanine exchange factor) SopE family. In terms of assembly, monomer. Interacts with human CDC42.

The protein localises to the secreted. In terms of biological role, activator for both CDC42 and RAC1 by directly interacting with these Rho GTPases and acting as a guanine nucleotide exchange factor (GEF). This activation results in actin cytoskeleton rearrangements and stimulates membrane ruffling, thus promoting bacterial entry into non-phagocytic cells. The chain is Guanine nucleotide exchange factor BopE (bopE) from Burkholderia mallei (strain NCTC 10247).